Here is a 485-residue protein sequence, read N- to C-terminus: uncharacterized protein (485 aa).

The protein resides in the virion. This is an uncharacterized protein from Acanthamoeba polyphaga mimivirus (APMV).